A 179-amino-acid chain; its full sequence is uncharacterized protein (179 aa).

2 stretches are compositionally biased toward polar residues: residues 1–37 (PLGA…TNPG) and 60–70 (IPTQSTTTFRS). Disordered stretches follow at residues 1–41 (PLGA…PSAK) and 60–82 (IPTQ…PGRR).

Component of the acid-soluble and acid-insoluble organic matrix of calcified shell layers (at protein level).

The protein resides in the secreted. This is an uncharacterized protein from Haliotis asinina (Donkey's ear abalone).